A 306-amino-acid chain; its full sequence is Homeobox protein CUP9 (306 aa).

A disordered region spans residues 75–123 (PAINSGGTSTTATPTASTVETSKTSSSAMDTQSQYGSSKKSKSASDDAK). Positions 79–96 (SGGTSTTATPTASTVETS) are enriched in low complexity. Residues 97-110 (KTSSSAMDTQSQYG) are compositionally biased toward polar residues. The segment at residues 162–224 (NSGRRSNLPK…NVRRRKIFSD (63 aa)) is a DNA-binding region (homeobox; TALE-type).

Belongs to the TALE/CUP9 homeobox family.

Its subcellular location is the nucleus. Its function is as follows. Probable DNA-binding protein which plays a role in protecting yeast cells against copper toxicity. May regulate the expression of important copper homeostatic genes. This is Homeobox protein CUP9 (CUP9) from Saccharomyces cerevisiae (strain ATCC 204508 / S288c) (Baker's yeast).